A 404-amino-acid polypeptide reads, in one-letter code: Exodeoxyribonuclease 7 large subunit (404 aa).

The protein belongs to the XseA family. As to quaternary structure, heterooligomer composed of large and small subunits.

The protein resides in the cytoplasm. It catalyses the reaction Exonucleolytic cleavage in either 5'- to 3'- or 3'- to 5'-direction to yield nucleoside 5'-phosphates.. Bidirectionally degrades single-stranded DNA into large acid-insoluble oligonucleotides, which are then degraded further into small acid-soluble oligonucleotides. This Ruminiclostridium cellulolyticum (strain ATCC 35319 / DSM 5812 / JCM 6584 / H10) (Clostridium cellulolyticum) protein is Exodeoxyribonuclease 7 large subunit.